The sequence spans 229 residues: Protein N-lysine methyltransferase METTL21D (229 aa).

Position 2 is an N-acetylalanine (A2). A Phosphoserine modification is found at S8. S-adenosyl-L-methionine is bound by residues W43, 75–77, D96, W126, A143, and Y148; that span reads GSG.

Belongs to the methyltransferase superfamily. METTL21 family. In terms of assembly, interacts with ALKBH6. Interacts with ASPSCR1 and UBXN6; interaction with ASPSCR1, but not with UBXN6, enhances VCP methylation.

It localises to the cytoplasm. It carries out the reaction L-lysyl-[protein] + 3 S-adenosyl-L-methionine = N(6),N(6),N(6)-trimethyl-L-lysyl-[protein] + 3 S-adenosyl-L-homocysteine + 3 H(+). In terms of biological role, protein N-lysine methyltransferase that specifically trimethylates 'Lys-315' of VCP/p97; this modification may decrease VCP ATPase activity. The sequence is that of Protein N-lysine methyltransferase METTL21D (VCPKMT) from Homo sapiens (Human).